The primary structure comprises 162 residues: Large ribosomal subunit protein uL15 (162 aa).

Positions 1–44 are disordered; that stretch reads MKLNELRDNPGATKNRIRVGRGIGSGKGKTAGRGVKGQKSREGV. Residues 21–35 show a composition bias toward gly residues; it reads RGIGSGKGKTAGRGV.

This sequence belongs to the universal ribosomal protein uL15 family. In terms of assembly, part of the 50S ribosomal subunit.

Its function is as follows. Binds to the 23S rRNA. The chain is Large ribosomal subunit protein uL15 from Rhodospirillum rubrum (strain ATCC 11170 / ATH 1.1.1 / DSM 467 / LMG 4362 / NCIMB 8255 / S1).